A 91-amino-acid polypeptide reads, in one-letter code: Large ribosomal subunit protein uL23c (91 aa).

This sequence belongs to the universal ribosomal protein uL23 family. Part of the 50S ribosomal subunit.

It is found in the plastid. The protein resides in the chloroplast. Functionally, binds to 23S rRNA. The protein is Large ribosomal subunit protein uL23c (rpl23) of Chaetosphaeridium globosum (Charophycean green alga).